Here is a 194-residue protein sequence, read N- to C-terminus: Calcium channel flower (194 aa).

3 helical membrane-spanning segments follow: residues 35-55 (LGIVAAFFAILFGLWNVFSII), 66-88 (IIQMVAGFVVMLLEALCCFVCFE), and 107-127 (GLYIAMAIPPIILCFGLASLF).

This sequence belongs to the calcium channel flower family. In terms of assembly, homomultimer. Associates with the dally/ magu complex.

Its subcellular location is the cell membrane. The protein resides in the cytoplasmic vesicle. It localises to the secretory vesicle. The protein localises to the synaptic vesicle membrane. It is found in the presynaptic cell membrane. Its subcellular location is the endosome. Channel activity is inhibited by La(3+), which reduces Ca(2+) influx and thus inhibits it's function in promoting activity-dependent bulk endocytosis (ADBE) in response to high stimuli. Transmembrane protein which mediates synaptic endocytosis, fitness-based cell culling, neuronal culling, morphogen gradient scaling, and calcium transport. Regulates synaptic endocytosis and hence couples exo- with endocytosis. Controls two major modes of synaptic vesicle (SV) endocytosis in the synaptic boutons of neuromuscular junctions (NMJs); Ca(2+) channel-independent Clathrin-mediated endocytosis (CME) in response to mild stimulation, and Ca(2+) channel-dependent activity-dependent bulk endocytosis (ADBE) in response to strong stimulation. Functions in ADBE and subsequent SV reformation from bulk endosomes by initiating Ca(2+) channel-dependent phosphatidylinositol 4,5-bisphosphate (PtdIns(4,5)P2) compartmentalization in synaptic boutons. There it acts at the periactive zone to provide the low Ca(2+) levels required to initiate Calcineurin activation and upregulate PtdIns(4,5)P2. Conversely PtdIns(4,5)P2 enhances fwe Ca(2+) channel-activity, establishing a positive feedback loop that induces PtdIns(4,5)P2 microdomain at the periactive zone. These microdomains trigger bulk membrane invagination (i.e. ADBE) by triggering actin polymerization while also promoting localization of fwe to bulk endosomes, thereby removing the ADBE trigger to reduce endocytosis and prevent excess membrane uptake. PtdIns(4,5)P2 then promotes SV reformation from the bulk endosomes, to coordinate ADBE and subsequent SV reformation. Different combinations of the flower isoforms at the cell membrane are also required for the identification and elimination of suboptimal or supernumerary cells during development, regeneration, and adulthood. Required for the recognition and elimination of unfit cells in the developing wing during cell competition. In the developing pupal retina, mediates the elimination of unwanted postmitotic neurons, including supernumerary photoreceptor neurons that form at the periphery of the retina and are contained within incomplete ommatidia units. Also required for efficient elimination and replacement of old neurons by newly generated neurons during regeneration in the adult brain following mechanical injury. Downstream of the flower fitness fingerprints, cells identified as unwanted or unfit are eliminated via apoptosis through the expression of ahuizotl (azot). However, the cells marked for elimination by the flower isoforms only undergo apoptosis if additional thresholds are met; (1) their neighboring fit/healthy cells express different levels of the fwe isoforms, and (2) the levels of the protective signal SPARC expressed by the loser or unwanted cells are unable to inhibit caspase activation. These additional thresholds for flower-mediated apoptosis, allows useful cells to recover from transient and limited stress before they are unnecessarily eliminated. Functions with dally and magu in a mechanism of scaling, which utilises apoptosis to ensure that the dpp morphogen gradient, which mediates organ growth, remains proportional to the size of the growing wing. In this mechanism, fwe represses dally- and Magu-dependent activity in expanding the gradient, and dally/Magu inhibits fwe-dependent apoptosis to keep cell death rate low. When the levels of these different proteins are optimally regulated the gradient correctly scales with organ growth but when this fails, fwe-mediated apoptosis is activated to trim the developing tissue to match the correct size of the gradient. The chain is Calcium channel flower from Drosophila sechellia (Fruit fly).